Consider the following 99-residue polypeptide: UPF0235 protein HS_1657 (99 aa).

Belongs to the UPF0235 family.

This Histophilus somni (strain 129Pt) (Haemophilus somnus) protein is UPF0235 protein HS_1657.